Reading from the N-terminus, the 97-residue chain is Pyrin domain-containing protein 2 (97 aa).

Positions 1-94 (MASSAELDFN…SGRADEHCVM (94 aa)) constitute a Pyrin domain.

As to quaternary structure, interacts with PYCARD/ASC (via pyrin domain). Interacts with NLRP2 (via pyrin domain). As to expression, predominantly expressed in peripheral blood. Weakly expressed in testis.

Its subcellular location is the cytoplasm. The protein resides in the nucleus. Its function is as follows. May play a role in innate immunity by disrupting the interaction between PYCARD and NLRP3, thereby regulating the NLRP3 inflammasome. May also inhibit NF-kappa-B signaling distally by affecting the nuclear accumulation of RELA. The sequence is that of Pyrin domain-containing protein 2 from Homo sapiens (Human).